A 289-amino-acid chain; its full sequence is 4-hydroxy-tetrahydrodipicolinate synthase (289 aa).

Residue Thr-42 participates in pyruvate binding. Tyr-129 functions as the Proton donor/acceptor in the catalytic mechanism. The active-site Schiff-base intermediate with substrate is the Lys-157. Pyruvate is bound at residue Ile-198.

This sequence belongs to the DapA family. As to quaternary structure, homotetramer; dimer of dimers.

It is found in the cytoplasm. It carries out the reaction L-aspartate 4-semialdehyde + pyruvate = (2S,4S)-4-hydroxy-2,3,4,5-tetrahydrodipicolinate + H2O + H(+). Its pathway is amino-acid biosynthesis; L-lysine biosynthesis via DAP pathway; (S)-tetrahydrodipicolinate from L-aspartate: step 3/4. Its function is as follows. Catalyzes the condensation of (S)-aspartate-beta-semialdehyde [(S)-ASA] and pyruvate to 4-hydroxy-tetrahydrodipicolinate (HTPA). In Chlamydia caviae (strain ATCC VR-813 / DSM 19441 / 03DC25 / GPIC) (Chlamydophila caviae), this protein is 4-hydroxy-tetrahydrodipicolinate synthase.